A 641-amino-acid chain; its full sequence is Threonine--tRNA ligase (641 aa).

The region spanning 1–61 is the TGS domain; that stretch reads MPVITLPDGS…ENDTELAIVT (61 aa). Positions 242 to 533 are catalytic; that stretch reads DHRKIGKKLG…LIEEYEGAFP (292 aa). Zn(2+)-binding residues include C333, H384, and H510.

It belongs to the class-II aminoacyl-tRNA synthetase family. In terms of assembly, homodimer. The cofactor is Zn(2+).

The protein localises to the cytoplasm. The enzyme catalyses tRNA(Thr) + L-threonine + ATP = L-threonyl-tRNA(Thr) + AMP + diphosphate + H(+). Catalyzes the attachment of threonine to tRNA(Thr) in a two-step reaction: L-threonine is first activated by ATP to form Thr-AMP and then transferred to the acceptor end of tRNA(Thr). Also edits incorrectly charged L-seryl-tRNA(Thr). This is Threonine--tRNA ligase from Marinobacter nauticus (strain ATCC 700491 / DSM 11845 / VT8) (Marinobacter aquaeolei).